The sequence spans 129 residues: Small ribosomal subunit protein bS6 (129 aa).

Residues 100–129 are disordered; sequence SIMLKQKEERAPRREERSEAKPEAKSEAAE. Residues 104–129 show a composition bias toward basic and acidic residues; sequence KQKEERAPRREERSEAKPEAKSEAAE.

The protein belongs to the bacterial ribosomal protein bS6 family.

Binds together with bS18 to 16S ribosomal RNA. The sequence is that of Small ribosomal subunit protein bS6 from Vibrio parahaemolyticus serotype O3:K6 (strain RIMD 2210633).